A 126-amino-acid chain; its full sequence is Phosphoribosyl-AMP cyclohydrolase (126 aa).

Residue D77 participates in Mg(2+) binding. Residue C78 coordinates Zn(2+). Residues D79 and D81 each coordinate Mg(2+). Positions 95 and 102 each coordinate Zn(2+).

Belongs to the PRA-CH family. As to quaternary structure, homodimer. Mg(2+) is required as a cofactor. The cofactor is Zn(2+).

The protein localises to the cytoplasm. The catalysed reaction is 1-(5-phospho-beta-D-ribosyl)-5'-AMP + H2O = 1-(5-phospho-beta-D-ribosyl)-5-[(5-phospho-beta-D-ribosylamino)methylideneamino]imidazole-4-carboxamide. The protein operates within amino-acid biosynthesis; L-histidine biosynthesis; L-histidine from 5-phospho-alpha-D-ribose 1-diphosphate: step 3/9. Catalyzes the hydrolysis of the adenine ring of phosphoribosyl-AMP. The protein is Phosphoribosyl-AMP cyclohydrolase of Cellvibrio japonicus (strain Ueda107) (Pseudomonas fluorescens subsp. cellulosa).